A 145-amino-acid chain; its full sequence is Hemoglobin subunit beta-2 (145 aa).

A Globin domain is found at 2-145 (HLTDQEIKYI…VADAVGKGYH (144 aa)). Positions 63 and 91 each coordinate heme b.

The protein belongs to the globin family. Red blood cells.

The polypeptide is Hemoglobin subunit beta-2 (Telmatobius peruvianus (Andean frog)).